A 328-amino-acid chain; its full sequence is Sterol demethylase protein B (328 aa).

Belongs to the NAD(P)-dependent epimerase/dehydratase family.

It catalyses the reaction a 3beta-hydroxy-4alpha-methylsteroid-4beta-carboxylate + NAD(+) = a 4alpha-methyl-3-oxosteroid + CO2 + NADH. The catalysed reaction is a 3beta-hydroxy-4alpha-methylsteroid-4beta-carboxylate + NADP(+) = a 4alpha-methyl-3-oxosteroid + CO2 + NADPH. The enzyme catalyses 4beta-carboxy-4alpha-methyl-5alpha-cholesta-8,24-dien-3beta-ol + NAD(+) = 3-dehydro-4alpha-methylzymosterol + CO2 + NADH. It carries out the reaction 4beta-carboxy-4alpha-methyl-5alpha-cholesta-8,24-dien-3beta-ol + NADP(+) = 3-dehydro-4alpha-methylzymosterol + CO2 + NADPH. It catalyses the reaction 3-dehydro-4alpha-methylzymosterol + NADPH + H(+) = 4alpha-methylzymosterol + NADP(+). It participates in steroid biosynthesis; sterol biosynthesis. Participates in the biosynthesis of bacterial sterols. Together with SdmA, removes one methyl group from the C-4 position of 4,4-dimethylated steroid molecules. SdmB catalyzes an oxidative decarboxylation that results in reduction of the 3beta-hydroxy group at the C-3 carbon to an oxo group. It also functions as a ketoreductase that converts the C-3 oxo group back to a hydroxyl group after C-4 demethylation. The sequence is that of Sterol demethylase protein B from Methylococcus capsulatus (strain ATCC 33009 / NCIMB 11132 / Bath).